Here is a 330-residue protein sequence, read N- to C-terminus: Cyclin-dependent kinase 7 (330 aa).

The Protein kinase domain occupies 5 to 289 (YDTIKHLGEG…CTQSLQMEYF (285 aa)). ATP-binding positions include 11–19 (LGEGQFANV) and lysine 34. The active-site Proton acceptor is the aspartate 130. Threonine 163 is subject to Phosphothreonine. The disordered stretch occupies residues 305 to 330 (KKQQPQKRSRRLDDDGTRPVRRLNFD). Over residues 315–330 (RLDDDGTRPVRRLNFD) the composition is skewed to basic and acidic residues.

The protein belongs to the protein kinase superfamily. CMGC Ser/Thr protein kinase family. CDC2/CDKX subfamily. As to quaternary structure, catalytic component which, in association with cyclin H (cyh-1) and mat1, is likely to form the CAK complex.

The enzyme catalyses L-seryl-[protein] + ATP = O-phospho-L-seryl-[protein] + ADP + H(+). The catalysed reaction is L-threonyl-[protein] + ATP = O-phospho-L-threonyl-[protein] + ADP + H(+). It carries out the reaction [DNA-directed RNA polymerase] + ATP = phospho-[DNA-directed RNA polymerase] + ADP + H(+). Functionally, serine/threonine kinase involved in cell cycle control and in RNA polymerase II-mediated RNA transcription. Required for maintaining chromosome ploidy. May phosphorylate the large subunit of RNA polymerase II, ama-1. The sequence is that of Cyclin-dependent kinase 7 from Caenorhabditis elegans.